A 370-amino-acid polypeptide reads, in one-letter code: Acyl-CoA:lysophosphatidylglycerol acyltransferase 1 (370 aa).

The helical transmembrane segment at 22–42 threads the bilayer; sequence FAFMVANNLVAIPSYICYVII. The HXXXXD motif motif lies at 101-106; sequence HQATGD. A helical membrane pass occupies residues 342-362; sequence MWIFLIQSFAFLSGYLWYHII.

This sequence belongs to the 1-acyl-sn-glycerol-3-phosphate acyltransferase family. As to expression, ubiquitous. Expressed in heart, kidney, liver, skin, intestine, and thymus. Highest expression is detected in brain and testis.

Its subcellular location is the endoplasmic reticulum membrane. It catalyses the reaction a 2-acyl-sn-glycero-3-phosphoethanolamine + octadecanoyl-CoA = 1-octadecanoyl-2-acyl-sn-glycero-3-phosphoethanolamine + CoA. It carries out the reaction 2-(9Z-octadecenoyl)-sn-glycero-3-phosphoethanolamine + octadecanoyl-CoA = 1-octadecanoyl-2-(9Z-octadecenoyl)-sn-glycero-3-phosphoethanolamine + CoA. The enzyme catalyses a 2-acyl-sn-glycero-3-phosphoethanolamine + hexadecanoyl-CoA = 1-hexadecanoyl-2-acyl-sn-glycero-3-phosphoethanolamine + CoA. The catalysed reaction is 2-(9Z-octadecenoyl)-sn-glycero-3-phosphoethanolamine + hexadecanoyl-CoA = 1-hexadecanoyl-2-(9Z-octadecenoyl)-sn-glycero-3-phosphoethanolamine + CoA. It catalyses the reaction 1-tetradecanoyl-sn-glycero-3-phospho-(1'-sn-glycerol) + hexadecanoyl-CoA = 1-tetradecanoyl-2-hexadecanoyl-sn-glycero-3-phospho-(1'-sn-glycerol) + CoA. It carries out the reaction 1-hexadecanoyl-sn-glycero-3-phospho-(1'-sn-glycerol) + dodecanoyl-CoA = 1-hexadecanoyl-2-dodecanoyl-sn-glycero-3-phospho-(1'-sn-glycerol) + CoA. The enzyme catalyses 1-hexadecanoyl-sn-glycero-3-phospho-(1'-sn-glycerol) + hexadecanoyl-CoA = 1,2-dihexadecanoyl-sn-glycero-3-phospho-(1'-sn-glycerol) + CoA. The catalysed reaction is 1-hexadecanoyl-sn-glycero-3-phospho-(1'-sn-glycerol) + octadecanoyl-CoA = 1-hexadecanoyl-2-octadecanoyl-sn-glycero-3-phospho-(1'-sn-glycerol) + CoA. It catalyses the reaction 1-octadecanoyl-sn-glycero-3-phospho-(1'-sn-glycerol) + hexadecanoyl-CoA = 1-octadecanoyl-2-hexadecanoyl-sn-glycero-3-phospho-(1'-sn-glycerol) + CoA. It carries out the reaction 1-(9Z-octadecenoyl)-sn-glycero-3-phospho-(1'-sn-glycerol) + dodecanoyl-CoA = 1-(9Z-octadecenoyl)-2-dodecanoyl-sn-glycero-3-phospho-(1'-sn-glycerol) + CoA. The enzyme catalyses 1-hexadecanoyl-sn-glycero-3-phospho-(1'-sn-glycerol) + (9Z)-octadecenoyl-CoA = 1-hexadecanoyl-2-(9Z-octadecenoyl)-sn-glycero-3-phospho-(1'-sn-glycerol) + CoA. The catalysed reaction is 1-(9Z-octadecenoyl)-sn-glycero-3-phospho-(1'-sn-glycerol) + hexadecanoyl-CoA = 1-(9Z-octadecenoyl)-2-hexadecanoyl-sn-glycero-3-phospho-(1'-sn-glycerol) + CoA. It catalyses the reaction 1-(9Z-octadecenoyl)-sn-glycero-3-phospho-(1'-sn-glycerol) + (9Z)-octadecenoyl-CoA = 1,2-di-(9Z-octadecenoyl)-sn-glycero-3-phospho-(1'-sn-glycerol) + CoA. It carries out the reaction a 2-acylglycerol + an acyl-CoA = a 1,2-diacylglycerol + CoA. The enzyme catalyses a 2-acylglycerol + hexadecanoyl-CoA = a 1-hexadecanoyl-2-acylglycerol + CoA. The catalysed reaction is a 1-acylglycerol + hexadecanoyl-CoA = an hexadecanoyl-acylglycerol + CoA. It catalyses the reaction a 2-acyl-sn-glycero-3-phosphocholine + an acyl-CoA = a 1,2-diacyl-sn-glycero-3-phosphocholine + CoA. It carries out the reaction 2-(9Z-octadecenoyl)-sn-glycero-3-phosphocholine + octadecanoyl-CoA = 1-octadecanoyl-2-(9Z-octadecenoyl)-sn-glycero-3-phosphocholine + CoA. The enzyme catalyses 2-(9Z,12Z-octadecadienoyl)-sn-glycero-3-phosphocholine + octadecanoyl-CoA = 1-octadecanoyl-2-(9Z,12Z)-octadecadienoyl-sn-glycero-3-phosphocholine + CoA. The catalysed reaction is 2-(5Z,8Z,11Z,14Z)-eicosatetraenoyl-sn-glycero-3-phosphocholine + octadecanoyl-CoA = 1-octadecanoyl-2-(5Z,8Z,11Z,14Z-eicosatetraenoyl)-sn-glycero-3-phosphocholine + CoA. It catalyses the reaction 2-(9Z-octadecenoyl)-sn-glycero-3-phosphocholine + hexadecanoyl-CoA = 1-hexadecanoyl-2-(9Z-octadecenoyl)-sn-glycero-3-phosphocholine + CoA. It carries out the reaction 2-(9Z-octadecenoyl)-sn-glycero-3-phospho-L-serine + hexadecanoyl-CoA = 1-hexadecanoyl-2-(9Z-octadecenoyl)-sn-glycero-3-phospho-L-serine + CoA. The enzyme catalyses 2-(4Z,7Z,10Z,13Z,16Z,19Z-docosahexaenoyl)-sn-glycero-3-phosphocholine + octadecanoyl-CoA = 1-octadecanoyl-2-(4Z,7Z,10Z,13Z,16Z,19Z-docosahexaenoyl)-sn-glycero-3-phosphocholine + CoA. The catalysed reaction is 1-(9Z-octadecenoyl)-sn-glycero-3-phospho-L-serine + octadecanoyl-CoA = 1-(9Z-octadecenoyl)-2-octadecanoyl-sn-glycero-3-phospho-L-serine + CoA. It catalyses the reaction a 2-acyl-sn-glycero-3-phosphoethanolamine + a fatty acyl-CoA = a 1,2-diacyl-sn-glycero-3-phosphoethanolamine + CoA. Functionally, lysophospholipid acyltransferase involved in fatty acyl chain remodeling of glycerophospholipids in the endoplasmic reticulum membrane. Selectively catalyzes the transfer and esterification of saturated long-chain fatty acids from acyl-CoA to the sn-1 position of 1-lyso-2-acyl phosphatidylethanolamines (1-lyso-PE, LPE), with a preference for stearoyl CoA over palmitoyl CoA as acyl donor. Acts in concert with an unknown phospholipase A1 to convert palmitate PE species into stearate ones. Provides substrates to the PE methylation pathway, controlling stearate/palmitate composition of PE and phosphatidylcholine (PC) species with an overall impact on de novo hepatic lipid synthesis, body fat content and life span. Can acylate lysophosphatidylglycerols (LPG) using various saturated fatty acyl-CoAs as acyl donors. Can also acylate monoacylglycerols with a preference for 2-monoacylglycerols over 1-monoacylglycerols. Has no activity toward lysophosphatidic acids (LPA) and lysophosphatidylcholines (LPC). This Mus musculus (Mouse) protein is Acyl-CoA:lysophosphatidylglycerol acyltransferase 1.